The primary structure comprises 379 residues: Queuine tRNA-ribosyltransferase (379 aa).

The active-site Proton acceptor is Asp-94. Residues 94–98, Asp-148, Gln-191, and Gly-218 each bind substrate; that span reads DSGGF. Positions 249-255 are RNA binding; the sequence is GVGSPDS. Residue Asp-268 is the Nucleophile of the active site. An RNA binding; important for wobble base 34 recognition region spans residues 273-277; that stretch reads TRIAR. Zn(2+) contacts are provided by Cys-306, Cys-308, Cys-311, and His-337.

It belongs to the queuine tRNA-ribosyltransferase family. As to quaternary structure, homodimer. Within each dimer, one monomer is responsible for RNA recognition and catalysis, while the other monomer binds to the replacement base PreQ1. Zn(2+) is required as a cofactor.

The catalysed reaction is 7-aminomethyl-7-carbaguanine + guanosine(34) in tRNA = 7-aminomethyl-7-carbaguanosine(34) in tRNA + guanine. It functions in the pathway tRNA modification; tRNA-queuosine biosynthesis. Catalyzes the base-exchange of a guanine (G) residue with the queuine precursor 7-aminomethyl-7-deazaguanine (PreQ1) at position 34 (anticodon wobble position) in tRNAs with GU(N) anticodons (tRNA-Asp, -Asn, -His and -Tyr). Catalysis occurs through a double-displacement mechanism. The nucleophile active site attacks the C1' of nucleotide 34 to detach the guanine base from the RNA, forming a covalent enzyme-RNA intermediate. The proton acceptor active site deprotonates the incoming PreQ1, allowing a nucleophilic attack on the C1' of the ribose to form the product. After dissociation, two additional enzymatic reactions on the tRNA convert PreQ1 to queuine (Q), resulting in the hypermodified nucleoside queuosine (7-(((4,5-cis-dihydroxy-2-cyclopenten-1-yl)amino)methyl)-7-deazaguanosine). The polypeptide is Queuine tRNA-ribosyltransferase (Bacillus cereus (strain G9842)).